The following is a 283-amino-acid chain: MAGNFWQSSHYLQWILDKQDLLKERQKDLKFLSEEEYWKLQIFFTNVIQALGEHLKLRQQVIATATVYFKRFYARYSLKSIDPVLMAPTCVFLASKVEEFGVVSNTRLISAATSVLKTRFSYAFPKEFPYRMNHILECEFYLLELMDCCLIVYHPYRPLLQYVQDMGQEDMLLPLAWRIVNDTYRTDLCLLYPPFMIALACLHVACVVQQKDARQWFAELSVDMEKILEIIRVILKLYEQWKNFDERKEMATILSKMPKPKPPPNSEGEQGPNGSQNSSYSQS.

The Cyclin N-terminal domain maps to 46 to 144 (NVIQALGEHL…ILECEFYLLE (99 aa)). Positions 252-283 (TILSKMPKPKPPPNSEGEQGPNGSQNSSYSQS) are disordered. Polar residues predominate over residues 272 to 283 (PNGSQNSSYSQS).

Belongs to the cyclin family. Cyclin C subfamily. In terms of assembly, component of the Mediator complex. The cylin/CDK pair formed by CCNC/CDK8 also associates with the large subunit of RNA polymerase II.

The protein localises to the nucleus. Functionally, component of the Mediator complex, a coactivator involved in regulated gene transcription of nearly all RNA polymerase II-dependent genes. Mediator functions as a bridge to convey information from gene-specific regulatory proteins to the basal RNA polymerase II transcription machinery. Mediator is recruited to promoters by direct interactions with regulatory proteins and serves as a scaffold for the assembly of a functional preinitiation complex with RNA polymerase II and the general transcription factors. Binds to and activates cyclin-dependent kinase CDK8 that phosphorylates the CTD (C-terminal domain) of the large subunit of RNA polymerase II (RNAp II), which may inhibit the formation of a transcription initiation complex. This Gallus gallus (Chicken) protein is Cyclin-C (CCNC).